A 202-amino-acid chain; its full sequence is GTP cyclohydrolase 1 (202 aa).

Zn(2+) contacts are provided by cysteine 90, histidine 93, and cysteine 163.

The protein belongs to the GTP cyclohydrolase I family. Homomer.

The catalysed reaction is GTP + H2O = 7,8-dihydroneopterin 3'-triphosphate + formate + H(+). It participates in cofactor biosynthesis; 7,8-dihydroneopterin triphosphate biosynthesis; 7,8-dihydroneopterin triphosphate from GTP: step 1/1. The protein is GTP cyclohydrolase 1 of Mycolicibacterium gilvum (strain PYR-GCK) (Mycobacterium gilvum (strain PYR-GCK)).